A 317-amino-acid polypeptide reads, in one-letter code: Zinc finger protein 771 (317 aa).

K33 participates in a covalent cross-link: Glycyl lysine isopeptide (Lys-Gly) (interchain with G-Cter in SUMO2). 8 C2H2-type zinc fingers span residues 63 to 85 (HACPDCGRAFARRSTLAKHARTH), 91 to 113 (FACTECGRCFSQKSALTKHGRTH), 119 to 141 (YQCPECDKRFSAASNLRQHRRRH), 147 to 169 (YACAHCGRRFAQSSNYAQHLRVH), 175 to 197 (YACPDCGRAFGGSSCLARHRRTH), 203 to 225 (YACADCGTRFAQSSALAKHRRVH), 231 to 253 (HRCAVCGRRFGHRSNLAEHARTH), and 259 to 281 (YPCTECGRRFRLSSHFIRHRRAH).

This sequence belongs to the krueppel C2H2-type zinc-finger protein family.

Its subcellular location is the nucleus. Functionally, may be involved in transcriptional regulation. The polypeptide is Zinc finger protein 771 (Znf771) (Mus musculus (Mouse)).